We begin with the raw amino-acid sequence, 167 residues long: NADH-quinone oxidoreductase subunit B (167 aa).

[4Fe-4S] cluster contacts are provided by cysteine 40, cysteine 41, cysteine 105, and cysteine 134.

Belongs to the complex I 20 kDa subunit family. As to quaternary structure, NDH-1 is composed of 14 different subunits. Subunits NuoB, C, D, E, F, and G constitute the peripheral sector of the complex. Requires [4Fe-4S] cluster as cofactor.

Its subcellular location is the cell inner membrane. The enzyme catalyses a quinone + NADH + 5 H(+)(in) = a quinol + NAD(+) + 4 H(+)(out). Its function is as follows. NDH-1 shuttles electrons from NADH, via FMN and iron-sulfur (Fe-S) centers, to quinones in the respiratory chain. The immediate electron acceptor for the enzyme in this species is believed to be ubiquinone. Couples the redox reaction to proton translocation (for every two electrons transferred, four hydrogen ions are translocated across the cytoplasmic membrane), and thus conserves the redox energy in a proton gradient. The protein is NADH-quinone oxidoreductase subunit B of Campylobacter jejuni subsp. jejuni serotype O:6 (strain 81116 / NCTC 11828).